A 98-amino-acid chain; its full sequence is MSLIHINILMAFTMSLVGLLMYRSHLMSALLCLEGMVLSLFILMTLTILNSHFTLANMVPIILLVFAACEAAIGLALLVMVSNTYGTDYVQNLNLLQC.

The next 3 membrane-spanning stretches (helical) occupy residues 1 to 21, 29 to 49, and 61 to 81; these read MSLIHINILMAFTMSLVGLLM, ALLCLEGMVLSLFILMTLTIL, and IILLVFAACEAAIGLALLVMV.

This sequence belongs to the complex I subunit 4L family. Core subunit of respiratory chain NADH dehydrogenase (Complex I) which is composed of 45 different subunits.

It localises to the mitochondrion inner membrane. It catalyses the reaction a ubiquinone + NADH + 5 H(+)(in) = a ubiquinol + NAD(+) + 4 H(+)(out). Its function is as follows. Core subunit of the mitochondrial membrane respiratory chain NADH dehydrogenase (Complex I) which catalyzes electron transfer from NADH through the respiratory chain, using ubiquinone as an electron acceptor. Part of the enzyme membrane arm which is embedded in the lipid bilayer and involved in proton translocation. The chain is NADH-ubiquinone oxidoreductase chain 4L (MT-ND4L) from Phocoena phocoena (Harbor porpoise).